The following is a 645-amino-acid chain: Threonine--tRNA ligase (645 aa).

The TGS domain occupies 1-63 (MNQINIQFPD…EQDGAIEIIT (63 aa)). Residues 242 to 540 (DHRKIGKDLE…LTEETKGAFP (299 aa)) form a catalytic region. Zn(2+) is bound by residues cysteine 336, histidine 387, and histidine 517.

This sequence belongs to the class-II aminoacyl-tRNA synthetase family. As to quaternary structure, homodimer. It depends on Zn(2+) as a cofactor.

The protein resides in the cytoplasm. The catalysed reaction is tRNA(Thr) + L-threonine + ATP = L-threonyl-tRNA(Thr) + AMP + diphosphate + H(+). Catalyzes the attachment of threonine to tRNA(Thr) in a two-step reaction: L-threonine is first activated by ATP to form Thr-AMP and then transferred to the acceptor end of tRNA(Thr). Also edits incorrectly charged L-seryl-tRNA(Thr). This chain is Threonine--tRNA ligase, found in Staphylococcus epidermidis (strain ATCC 35984 / DSM 28319 / BCRC 17069 / CCUG 31568 / BM 3577 / RP62A).